The sequence spans 235 residues: RNA polymerase sigma-E factor (235 aa).

The short motif at 82–95 (DLISVGTIGLIKAV) is the Polymerase core binding element. The segment at residues 202–221 (QKEVADMLGISQSYISRLEK) is a DNA-binding region (H-T-H motif).

The protein belongs to the sigma-70 factor family.

Functionally, sigma factors are initiation factors that promote the attachment of RNA polymerase to specific initiation sites and are then released. This sigma factor is responsible for the expression of sporulation specific genes. This chain is RNA polymerase sigma-E factor (sigE), found in Clostridium acetobutylicum (strain ATCC 824 / DSM 792 / JCM 1419 / IAM 19013 / LMG 5710 / NBRC 13948 / NRRL B-527 / VKM B-1787 / 2291 / W).